Reading from the N-terminus, the 1414-residue chain is Protein KATNIP homolog (1414 aa).

Disordered stretches follow at residues 1 to 32 (MHGK…DEKH), 80 to 116 (QQST…PGKI), 139 to 158 (GPNT…NEDQ), 712 to 731 (VSAT…NDLT), 756 to 783 (SSSS…TFTN), 823 to 861 (KMDN…SEKY), and 924 to 943 (QQQK…SLMP). Composition is skewed to basic and acidic residues over residues 10–32 (RKND…DEKH) and 86–101 (LARE…DDGC). Over residues 147-158 (DFESDDDMNEDQ) the composition is skewed to acidic residues. 2 stretches are compositionally biased toward polar residues: residues 832-843 (NFSNQSSYNSDR) and 924-940 (QQQK…NGSS).

Its subcellular location is the cytoplasm. It localises to the cytoskeleton. The protein resides in the cilium axoneme. The protein localises to the cilium basal body. Functionally, may control cilium integrity. This Xenopus laevis (African clawed frog) protein is Protein KATNIP homolog.